We begin with the raw amino-acid sequence, 579 residues long: Suppressor of cytokine signaling 7 (579 aa).

Disordered regions lie at residues 1–25 (MVFR…GPSE), 89–270 (PPPP…RTQS), and 295–315 (QRGL…RSLS). 3 stretches are compositionally biased toward pro residues: residues 89–99 (PPPPQPPPPAA), 155–165 (PPGPELPPVPF), and 185–196 (QPPPPPPPPGPL). Residues 124–492 (AESLETNSCS…GKFLYFLRSR (369 aa)) are mediates interaction with SORBS3. Residues 206–217 (GSFKIRLSRLFR) show a composition bias toward basic residues. The span at 301-311 (PHPPTPPPPPR) shows a compositional bias: pro residues. The SH2 domain occupies 398–507 (WYWGPMNWED…PTPVQLLYPV (110 aa)). The region spanning 502–552 (QLLYPVSRFSNVKSLQHLCRFRIRQLVRIDHIPDLPLPKPLISYIRKFYYY) is the SOCS box domain.

Substrate-recognition component of the ECS(SOCS7) complex, composed of SOCS7, CUL5, ELOB, ELOC and RNF7/RBX2. Interacts, via the third proline-rich region, with the second SH3 domain of the adapter protein NCK1. Also interacts with GRB2, INSR, PLCG1, SORBS3/vinexin, and phosphorylated STAT3 and STAT5. Interacts with SEPT6. Interacts with phosphorylated IRS4 and PIK3R1. In terms of tissue distribution, widely expressed with higher expression in brain and testis where it is expressed by spermatocytes and early spermatids. Also significantly expressed in spleen, skeletal muscle and kidney.

It localises to the cytoplasm. The protein localises to the nucleus. It is found in the cell membrane. It functions in the pathway protein modification; protein ubiquitination. Its function is as follows. Substrate-recognition component of a cullin-5-RING E3 ubiquitin-protein ligase complex (ECS complex, also named CRL5 complex), which mediates the ubiquitination and subsequent proteasomal degradation of target proteins, such as DAB1 and IRS1. Specifically recognizes and binds phosphorylated proteins via its SH2 domain, promoting their ubiquitination. The ECS(SOCS7) complex acts as a key regulator of reelin signaling by mediating ubiquitination and degradation of phosphorylated DAB1 in the cortical plate of the developing cerebral cortex, thereby regulating neuron positioning during cortex development. Functions in insulin signaling and glucose homeostasis through IRS1 ubiquitination and subsequent proteasomal degradation. Also inhibits prolactin, growth hormone and leptin signaling by preventing STAT3 and STAT5 activation, sequestering them in the cytoplasm and reducing their binding to DNA. This is Suppressor of cytokine signaling 7 from Mus musculus (Mouse).